The following is a 707-amino-acid chain: D-(-)-3-hydroxybutyrate oligomer hydrolase (707 aa).

An N-terminal signal peptide occupies residues 1 to 24 (MHHDNFRRLGNAAFAAAAALLAVA). Ser-311 functions as the Charge relay system in the catalytic mechanism.

The protein belongs to the D-(-)-3-hydroxybutyrate oligomer hydrolase family.

Its subcellular location is the secreted. It carries out the reaction (3R)-hydroxybutanoate dimer + H2O = 2 (R)-3-hydroxybutanoate + H(+). It participates in lipid metabolism; butanoate metabolism. Participates in the degradation of poly-3-hydroxybutyrate (PHB). It works downstream of poly(3-hydroxybutyrate) depolymerase, hydrolyzing D(-)-3-hydroxybutyrate oligomers of various length (3HB-oligomers) into 3HB-monomers. This Cupriavidus pinatubonensis (strain JMP 134 / LMG 1197) (Cupriavidus necator (strain JMP 134)) protein is D-(-)-3-hydroxybutyrate oligomer hydrolase.